The sequence spans 286 residues: Myb family transcription factor PHL7 (286 aa).

Positions 12 to 72 (HASKQRLRWT…HLQKYRLAKY (61 aa)) constitute an HTH myb-type domain. The H-T-H motif DNA-binding region spans 43–68 (PKGVLRVMGVQGLTIYHVKSHLQKYR). The tract at residues 74-97 (PDSSSEGKKTDKKESGDMLSGLDG) is disordered. Residues 78–89 (SEGKKTDKKESG) are compositionally biased toward basic and acidic residues. A coiled-coil region spans residues 104-124 (TEALKLQMEVQKRLHEQLEVQ). An LHEQLE motif is present at residues 117 to 122 (LHEQLE). The segment at 152–227 (LGEPSAPVTG…TGEERLSKKP (76 aa)) is disordered.

The protein belongs to the MYB-CC family.

It localises to the nucleus. This chain is Myb family transcription factor PHL7, found in Arabidopsis thaliana (Mouse-ear cress).